The following is a 133-amino-acid chain: Large-conductance mechanosensitive channel (133 aa).

2 helical membrane passes run 10–30 and 76–96; these read FAMR…GAFG and GAFI…FLMI.

This sequence belongs to the MscL family. Homopentamer.

Its subcellular location is the cell inner membrane. In terms of biological role, channel that opens in response to stretch forces in the membrane lipid bilayer. May participate in the regulation of osmotic pressure changes within the cell. In Pasteurella multocida (strain Pm70), this protein is Large-conductance mechanosensitive channel.